A 233-amino-acid chain; its full sequence is MQQLYDFYILHQCKYKENSLLVSIFTREFGKISGLIRVNKKTINLYQPLVKLRGQISLAKKSDGLSKIYNVEFVESFYQNTYINLLSLQYMNELIYLLLSYSHEEEFLFEKYGFILKNINEINYKYLLRMFELELLDSLGQGVYVDCDIDGMLIDESLSYSILATGFKKNLSTIPNSIAGKNLLKINQSVSLWTDEDLKAISKVTRAYIDYALAGKQLRSRKLLIDYLNLGKK.

It belongs to the RecO family.

Its function is as follows. Involved in DNA repair and RecF pathway recombination. This is DNA repair protein RecO from Francisella philomiragia subsp. philomiragia (strain ATCC 25017 / CCUG 19701 / FSC 153 / O#319-036).